The primary structure comprises 63 residues: Beta-toxin NaTx36 (63 aa).

The LCN-type CS-alpha/beta domain occupies 1–62; it reads KDGYPMRSDG…VYDSATSKCR (62 aa). 4 disulfide bridges follow: C11/C61, C15/C36, C22/C43, and C26/C45.

This sequence belongs to the long (4 C-C) scorpion toxin superfamily. Sodium channel inhibitor family. Beta subfamily. In terms of tissue distribution, expressed by the venom gland.

Its subcellular location is the secreted. In terms of biological role, beta toxins bind sodium channels (Nav) and shift the voltage of activation towards more negative potentials thereby affecting sodium channel activation and promoting spontaneous and repetitive firing. Only when tested on grasshopper mouse channels, this toxin inhibits Nav1.8/SCN10A sodium currents in a concentration and voltage-dependent manner (IC(50)=680 nM). This toxin hyperpolarizes the voltage dependence of Nav1.8/SCN10A activation, as well as steady-state fast inactivation and slow inactivation. In contrast to most beta scorpion toxins, this toxin inhibits grasshopper mouse Nav1.8/SCN10A currents through modulation of the domain I S4 voltage sensor, and the domain II second S5-S6 extracellular pore loop. This is Beta-toxin NaTx36 from Centruroides sculpturatus (Arizona bark scorpion).